Consider the following 414-residue polypeptide: Secernin-1 (414 aa).

It belongs to the peptidase C69 family. Secernin subfamily.

It localises to the cytoplasm. In terms of biological role, regulates exocytosis in mast cells. Increases both the extent of secretion and the sensitivity of mast cells to stimulation with calcium. The protein is Secernin-1 (Scrn1) of Mus musculus (Mouse).